A 258-amino-acid chain; its full sequence is Ferredoxin--NADP reductase (258 aa).

An FAD-binding FR-type domain is found at 2 to 102; it reads SNLNVERVLS…RKPTGTLVTS (101 aa). Asp-17 contacts NADP(+). Residues 51–54, 67–69, 74–77, and Thr-117 contribute to the FAD site; these read RAYS, FSI, and GPLT. NADP(+) is bound by residues 144–145, 181–182, and Arg-190; these read VR and TR. Residue 254–258 participates in FAD binding; sequence AFVEK.

The protein belongs to the ferredoxin--NADP reductase type 1 family. Monomer. FAD serves as cofactor.

The catalysed reaction is 2 reduced [2Fe-2S]-[ferredoxin] + NADP(+) + H(+) = 2 oxidized [2Fe-2S]-[ferredoxin] + NADPH. Functionally, transports electrons between ferredoxin and NADPH. This Azotobacter vinelandii protein is Ferredoxin--NADP reductase.